The primary structure comprises 194 residues: uncharacterized protein (194 aa).

Positions 1–15 are cleaved as a signal peptide; the sequence is MFVLSIALLSCTTLC. Residues 49 to 134 form the PAN domain; sequence CPQGLHADAI…KATYYEKIRC (86 aa). 2 disulfides stabilise this stretch: Cys-49/Cys-134 and Cys-79/Cys-106.

This is an uncharacterized protein from Caenorhabditis elegans.